The chain runs to 436 residues: Homeobox protein PKNOX1 (436 aa).

A disordered region spans residues 23 to 50 (ELKTEQDPNCSDPDAEGVSPPPIESQTP). Ser-33 and Ser-41 each carry phosphoserine. An MEIS N-terminal domain is found at 80–163 (GSEGTTSASF…MNSETLLSGE (84 aa)). Positions 259–321 (SKNKRGVLPK…NARRRILQPM (63 aa)) form a DNA-binding region, homeobox; TALE-type. Positions 401–436 (AGQSEDESVDSTEDEGGALAPTHISGLVLENSDSLQ) are disordered. The segment covering 404 to 416 (SEDESVDSTEDEG) has biased composition (acidic residues).

Belongs to the TALE/MEIS homeobox family. As to quaternary structure, interacts with MN1.

The protein resides in the nucleus. In terms of biological role, activates transcription in the presence of PBX1A and HOXA1. Functionally, (Microbial infection) In complex with PBX1, binds to the 5'-TGATTGAC-3' consensus sequence in the U5 region of Moloney murine leukemia virus and promotes viral transcription. The sequence is that of Homeobox protein PKNOX1 from Mus musculus (Mouse).